The primary structure comprises 143 residues: Large ribosomal subunit protein uL13 (143 aa).

This sequence belongs to the universal ribosomal protein uL13 family. As to quaternary structure, part of the 50S ribosomal subunit.

In terms of biological role, this protein is one of the early assembly proteins of the 50S ribosomal subunit, although it is not seen to bind rRNA by itself. It is important during the early stages of 50S assembly. This is Large ribosomal subunit protein uL13 from Carboxydothermus hydrogenoformans (strain ATCC BAA-161 / DSM 6008 / Z-2901).